The chain runs to 282 residues: 2-dehydro-3-deoxyphosphooctonate aldolase (282 aa).

This sequence belongs to the KdsA family.

Its subcellular location is the cytoplasm. The enzyme catalyses D-arabinose 5-phosphate + phosphoenolpyruvate + H2O = 3-deoxy-alpha-D-manno-2-octulosonate-8-phosphate + phosphate. Its pathway is carbohydrate biosynthesis; 3-deoxy-D-manno-octulosonate biosynthesis; 3-deoxy-D-manno-octulosonate from D-ribulose 5-phosphate: step 2/3. It functions in the pathway bacterial outer membrane biogenesis; lipopolysaccharide biosynthesis. This is 2-dehydro-3-deoxyphosphooctonate aldolase from Shewanella piezotolerans (strain WP3 / JCM 13877).